Reading from the N-terminus, the 239-residue chain is Bidirectional sugar transporter SWEET8 (239 aa).

Topologically, residues 1 to 6 (MVDAKQ) are extracellular. Residues 7–27 (VRFIIGVIGNVISFGLFAAPA) traverse the membrane as a helical segment. The region spanning 9 to 98 (FIIGVIGNVI…VYLMYCGHKK (90 aa)) is the MtN3/slv 1 domain. Residues 28–44 (KTFWRIFKKKSVEEFSY) lie on the Cytoplasmic side of the membrane. A helical transmembrane segment spans residues 45-65 (VPYVATVMNCMLWVFYGLPVV). Over 66-69 (HKDS) the chain is Extracellular. The chain crosses the membrane as a helical span at residues 70 to 90 (ILVSTINGVGLVIELFYVGVY). Residues 91-103 (LMYCGHKKNHRRN) are Cytoplasmic-facing. A helical membrane pass occupies residues 104-124 (ILGFLALEVILVVAIILITLF). Residues 125 to 135 (ALKGDFVKQTF) lie on the Extracellular side of the membrane. In terms of domain architecture, MtN3/slv 2 spans 134 to 185 (TFVGVICDVFNIAMYGAPSLAIIKVVKTKSVEYMPFLLSLVCFVNAGIWTTY). Residues 136-156 (VGVICDVFNIAMYGAPSLAII) form a helical membrane-spanning segment. Residues 157–168 (KVVKTKSVEYMP) are Cytoplasmic-facing. The chain crosses the membrane as a helical span at residues 169–189 (FLLSLVCFVNAGIWTTYSLIF). At 190–194 (KIDYY) the chain is on the extracellular side. A helical membrane pass occupies residues 195–215 (VLASNGIGTFLALSQLIVYFM). Over 216–239 (YYKSTPKEKTVKPSEVEISATERV) the chain is Cytoplasmic.

This sequence belongs to the SWEET sugar transporter family. Forms homooligomers and heterooligomers with SWEET4, SWEET5, SWEET6, SWEET7, SWEET9, SWEET10, SWEET11, SWEET13, SWEET15, SWEET16 and SWEET17. In terms of tissue distribution, expressed in inflorescences, embryo sacs and pollen, and at a lower level in stems. Barely detected in roots, leaves and seedlings.

It localises to the cell membrane. Mediates both low-affinity uptake and efflux of sugar across the plasma membrane. Required, in pollen, for microspore cell integrity and primexine pattern formation. In Arabidopsis thaliana (Mouse-ear cress), this protein is Bidirectional sugar transporter SWEET8.